Reading from the N-terminus, the 574-residue chain is E3 ubiquitin-protein ligase TRIM23 (574 aa).

The RING-type; degenerate zinc-finger motif lies at 31 to 76 (CGVCEDVFSLQGDKVPRLLLCGHTVCHDCLTRLPLHGRAIRCPFDR). The segment at 122–168 (ESIIRCDEDEAHVASVYCTVCATHLCSDCSQVTHSTKTLAKHRRVPL) adopts a B box-type; degenerate zinc-finger fold. Positions 352 to 379 (RVVLAKQEITRLLETLQKQQQQFTEVAD) form a coiled coil. Residues 390-574 (TFTKDNRVHI…LVAAGVLDVA (185 aa)) form an ARF-like region. GTP contacts are provided by residues 411-418 (GLDGAGKT), 454-458 (DVGGK), and 513-516 (NKQD).

In the C-terminal section; belongs to the small GTPase superfamily. Arf family. As to quaternary structure, homodimer. Interacts with PSCD1. Interacts with UBE2D2. Interacts with TBK1 (via N-terminal kinase domain) and p62/SQSTM1.

It localises to the cytoplasm. It is found in the endomembrane system. The protein localises to the golgi apparatus membrane. The protein resides in the lysosome membrane. It catalyses the reaction S-ubiquitinyl-[E2 ubiquitin-conjugating enzyme]-L-cysteine + [acceptor protein]-L-lysine = [E2 ubiquitin-conjugating enzyme]-L-cysteine + N(6)-ubiquitinyl-[acceptor protein]-L-lysine.. Its pathway is protein modification; protein ubiquitination. In terms of biological role, acts as an E3 ubiquitin-protein ligase. Plays an essential role in autophagy activation during viral infection. Mechanistically, activates TANK-binding kinase 1/TBK1 by facilitating its dimerization and ability to phosphorylate the selective autophagy receptor SQSTM1. In order to achieve this function, TRIM23 mediates 'Lys-27'-linked auto-ubiquitination of its ADP-ribosylation factor (ARF) domain to induce its GTPase activity and its recruitment to autophagosomes. This chain is E3 ubiquitin-protein ligase TRIM23 (Trim23), found in Mus musculus (Mouse).